The primary structure comprises 90 residues: Transcriptional repressor SdpR (90 aa).

One can recognise an HTH arsR-type domain in the interval 1–87 (MNNVFKAISD…WMLNFINKGD (87 aa)). A DNA-binding region (H-T-H motif) is located at residues 39 to 62 (PSISHHLNILKQAEVISDHRKGQF).

Its subcellular location is the cytoplasm. Represses the transcription of the sdpIR operon and of several other operons that probably contribute to delaying commitment to sporulation. The sequence is that of Transcriptional repressor SdpR (sdpR) from Bacillus subtilis (strain 168).